Reading from the N-terminus, the 392-residue chain is Cytochrome P450 monooxygenase ppzE (392 aa).

Residues 10–30 (LELVWFVALYPFACWTLFAVL) form a helical membrane-spanning segment. A glycan (N-linked (GlcNAc...) asparagine) is linked at asparagine 319. Cysteine 353 contacts heme. N-linked (GlcNAc...) asparagine glycosylation is present at asparagine 372.

Belongs to the cytochrome P450 family. Requires heme as cofactor.

The protein resides in the membrane. Its pathway is secondary metabolite biosynthesis. Functionally, cytochrome P450 monooxygenase; part of the gene cluster that mediates the biosynthesis of pyrrolopyrazines, secondary metabolites showing insecticidal activity. The role of ppzE within the pathway has still to be determined. The single multifunctional NRPS ppzA is sufficient to produce peramine via condensation of 1-pyrroline-5-carboxylate and arginine, N-methylation of the alpha-amino group of arginine and reduction of the thioester and the cyclization to form an iminium ion resulting in release from the peptide synthetase. Deprotonation of this intermediate and oxidation of the pyrroline ring would give rise to peramine. In Epichloe species that produce only peramine, the peramine synthetase gene is not localized in a gene cluster, in contrast to Metarhizium species that contain additional pyrrolopyrazine biosynthesis genes. The 2-oxoglutarate-Fe(II) type oxidoreductase ppzC hydroxylates peramine to yield the newly identified compound 8-hydroxyperamine whereas ppzD converts L-proline into trans-4-hydroxy-L-proline, a precursor of peramine biosynthesis. In Metarhizium rileyi (strain RCEF 4871) (Nomuraea rileyi), this protein is Cytochrome P450 monooxygenase ppzE.